A 542-amino-acid chain; its full sequence is CTP synthase (542 aa).

The segment at 1 to 265 (MTRYIFVTGG…DDFVVERFGL (265 aa)) is amidoligase domain. S13 is a CTP binding site. Position 13 (S13) interacts with UTP. ATP-binding positions include 14-19 (SLGKGI) and D71. Positions 71 and 139 each coordinate Mg(2+). CTP contacts are provided by residues 146–148 (DIE), 186–191 (KTKPTQ), and K222. UTP is bound by residues 186–191 (KTKPTQ) and K222. The region spanning 290-541 (TIAMVGKYME…VKAALAQKNK (252 aa)) is the Glutamine amidotransferase type-1 domain. G351 is an L-glutamine binding site. C378 acts as the Nucleophile; for glutamine hydrolysis in catalysis. Residues 379 to 382 (LGMQ), E402, and R469 contribute to the L-glutamine site. Catalysis depends on residues H514 and E516.

Belongs to the CTP synthase family. As to quaternary structure, homotetramer.

It carries out the reaction UTP + L-glutamine + ATP + H2O = CTP + L-glutamate + ADP + phosphate + 2 H(+). The catalysed reaction is L-glutamine + H2O = L-glutamate + NH4(+). The enzyme catalyses UTP + NH4(+) + ATP = CTP + ADP + phosphate + 2 H(+). It participates in pyrimidine metabolism; CTP biosynthesis via de novo pathway; CTP from UDP: step 2/2. Allosterically activated by GTP, when glutamine is the substrate; GTP has no effect on the reaction when ammonia is the substrate. The allosteric effector GTP functions by stabilizing the protein conformation that binds the tetrahedral intermediate(s) formed during glutamine hydrolysis. Inhibited by the product CTP, via allosteric rather than competitive inhibition. Its function is as follows. Catalyzes the ATP-dependent amination of UTP to CTP with either L-glutamine or ammonia as the source of nitrogen. Regulates intracellular CTP levels through interactions with the four ribonucleotide triphosphates. This chain is CTP synthase, found in Pseudomonas putida (strain ATCC 700007 / DSM 6899 / JCM 31910 / BCRC 17059 / LMG 24140 / F1).